A 410-amino-acid polypeptide reads, in one-letter code: Multifunctional CCA protein (410 aa).

ATP contacts are provided by Gly8 and Arg11. Residues Gly8 and Arg11 each coordinate CTP. Positions 21 and 23 each coordinate Mg(2+). Residues Arg91, Arg137, and Arg140 each contribute to the ATP site. CTP-binding residues include Arg91, Arg137, and Arg140. The 102-residue stretch at 228–329 (TGVHVLSVLQ…LELLQSFDVY (102 aa)) folds into the HD domain.

It belongs to the tRNA nucleotidyltransferase/poly(A) polymerase family. Bacterial CCA-adding enzyme type 1 subfamily. Monomer. Can also form homodimers and oligomers. Mg(2+) is required as a cofactor. The cofactor is Ni(2+).

The catalysed reaction is a tRNA precursor + 2 CTP + ATP = a tRNA with a 3' CCA end + 3 diphosphate. It carries out the reaction a tRNA with a 3' CCA end + 2 CTP + ATP = a tRNA with a 3' CCACCA end + 3 diphosphate. Functionally, catalyzes the addition and repair of the essential 3'-terminal CCA sequence in tRNAs without using a nucleic acid template. Adds these three nucleotides in the order of C, C, and A to the tRNA nucleotide-73, using CTP and ATP as substrates and producing inorganic pyrophosphate. tRNA 3'-terminal CCA addition is required both for tRNA processing and repair. Also involved in tRNA surveillance by mediating tandem CCA addition to generate a CCACCA at the 3' terminus of unstable tRNAs. While stable tRNAs receive only 3'-terminal CCA, unstable tRNAs are marked with CCACCA and rapidly degraded. This Pseudomonas aeruginosa (strain LESB58) protein is Multifunctional CCA protein.